We begin with the raw amino-acid sequence, 93 residues long: N-acetyl-S-hydroxy-L-cysteine reductase (93 aa).

Residues methionine 1–arginine 93 enclose the Glutaredoxin domain. A disulfide bridge connects residues cysteine 15 and cysteine 18.

This sequence belongs to the glutaredoxin family.

It carries out the reaction N-acetyl-S-hydroxy-L-cysteine + AH2 = N-acetyl-L-cysteine + A + H2O. It participates in amino-acid metabolism. In terms of biological role, involved in a cysteine salvage pathway from S-alkylcysteine. Catalyzes the reduction of N-acetyl-S-hydroxy-L-cysteine (N-acetyl-L-cysteine sulfenic acid) to N-acetyl-L-cysteine. This pathway is likely important in the catabolism of alkylated cysteine generated by proteolysis of alkylated glutathione formed in the detoxification of a wide range of electrophiles. This Bacillus subtilis (strain 168) protein is N-acetyl-S-hydroxy-L-cysteine reductase.